The sequence spans 521 residues: Tubulin-specific chaperone E (521 aa).

Residues 24–68 (GPVPPTAGVWLGVEWDHPERGKHDGSHDGVRYFTCRHPTGGSFVR) enclose the CAP-Gly domain. 7 LRR repeats span residues 147-168 (FVQS…AAIT), 173-194 (SLQE…SSLS), 199-220 (HLRV…HCAP), 224-245 (QVEE…EHVL), 247-268 (ALTV…EISH), 271-292 (RLER…DVPA), and 301-322 (ALKE…NELE). Positions 335–377 (NPLLHKEKNLETARQIMIARLGQLELLDMRQILSDERRGAELD) constitute an LRRCT domain.

Belongs to the TBCE family. In terms of assembly, supercomplex made of cofactors A to E. Cofactors A and D function by capturing and stabilizing tubulin in a quasi-native conformation. Cofactor E binds to the cofactor D-tubulin complex; interaction with cofactor C then causes the release of tubulin polypeptides that are committed to the native state.

It is found in the cytoplasm. Its subcellular location is the cytoskeleton. Functionally, tubulin-folding protein; involved in the second step of the tubulin folding pathway. The protein is Tubulin-specific chaperone E (tbce) of Danio rerio (Zebrafish).